A 510-amino-acid chain; its full sequence is Hexose carrier protein HEX6 (510 aa).

Topologically, residues M1–V22 are cytoplasmic. Helical transmembrane passes span A23–S43, S83–T103, V118–A128, V140–M160, I169–Y189, I202–P222, L284–F304, I325–L345, A349–M369, G382–W402, A428–F448, and G451–L471. Residues P472–A510 are Cytoplasmic-facing.

It belongs to the major facilitator superfamily. Sugar transporter (TC 2.A.1.1) family.

It is found in the membrane. In terms of biological role, active uptake of hexoses. Probable glucose/hydrogen symport. This is Hexose carrier protein HEX6 (HEX6) from Ricinus communis (Castor bean).